The following is a 380-amino-acid chain: Actin-like protein (380 aa).

Belongs to the actin family. ARP1 subfamily.

It localises to the cytoplasm. Its subcellular location is the cytoskeleton. Functionally, involved in nuclear migration. May function as a component of the dynactin complex which activates force generation by cytoplasmic dynein. This Neurospora crassa (strain ATCC 24698 / 74-OR23-1A / CBS 708.71 / DSM 1257 / FGSC 987) protein is Actin-like protein (ro-4).